Here is a 650-residue protein sequence, read N- to C-terminus: Acetyl-coenzyme A synthetase (650 aa).

Residues Arg191–Arg194, Thr311, and Asn335 each bind CoA. Residues Gly387 to Pro389, Asp411 to Thr416, Asp500, and Arg515 contribute to the ATP site. Ser523 lines the CoA pocket. Arg526 is a binding site for ATP. Mg(2+) contacts are provided by Val537, His539, and Val542. CoA is bound at residue Arg584. Lys609 carries the N6-acetyllysine modification.

It belongs to the ATP-dependent AMP-binding enzyme family. Mg(2+) serves as cofactor. In terms of processing, acetylated. Deacetylation by the SIR2-homolog deacetylase activates the enzyme.

The enzyme catalyses acetate + ATP + CoA = acetyl-CoA + AMP + diphosphate. Its function is as follows. Catalyzes the conversion of acetate into acetyl-CoA (AcCoA), an essential intermediate at the junction of anabolic and catabolic pathways. AcsA undergoes a two-step reaction. In the first half reaction, AcsA combines acetate with ATP to form acetyl-adenylate (AcAMP) intermediate. In the second half reaction, it can then transfer the acetyl group from AcAMP to the sulfhydryl group of CoA, forming the product AcCoA. The sequence is that of Acetyl-coenzyme A synthetase from Shewanella halifaxensis (strain HAW-EB4).